Reading from the N-terminus, the 839-residue chain is Homeobox-leucine zipper protein HOX10 (839 aa).

Disordered stretches follow at residues 1–24 (MAAA…SGMD) and 132–157 (QNTP…RDAS). The segment at residues 24 to 87 (DSGKYVRYTP…NRRCRDKQRK (64 aa)) is a DNA-binding region (homeobox). A coiled-coil region spans residues 91–134 (RLQAVNRKLTAMNKLLMEENERLQKQVSQLVHENAHMRQQLQNT). Residues 155–383 (DASNPSGLLS…IAQETSGEVV (229 aa)) form the START domain.

Belongs to the HD-ZIP homeobox family. Class III subfamily. In terms of tissue distribution, expressed in stems, leaf sheaths and blades and panicles.

It is found in the nucleus. Its function is as follows. Probable transcription factor. The sequence is that of Homeobox-leucine zipper protein HOX10 (HOX10) from Oryza sativa subsp. indica (Rice).